Here is a 623-residue protein sequence, read N- to C-terminus: MKTFTSALALVVGMLAPGAVVAAPPSTPAQRDLVELREARQEGGKDLRPREPTCNTPSNRACWSDGFDINTDYEVSTPDTGVTQSYVFNLTEVDNWMGPDGVVKEKVMLINGNIMGPNIVANWGDTVEVTVINNLVTNGTSIHWHGIHQKDTNLHDGANGVTECPIPPKGGQRTYRWRARQYGTSWYHSHFSAQYGNGVVGTIQINGPASLPYDIDLGVFPITDYYYRAADDLVHFTQNNAPPFSDNVLINGTAVNPNTGEGQYANVTLTPGKRHRLRILNTSTENHFQVSLVNHTMTVIAADMVPVNAMTVDSLFLAVGQRYDVVIDASRAPDNYWFNVTFGGQAACGGSLNPHPAAIFHYAGAPGGLPTDEGTPPVDHQCLDTLDVRPVVPRSVPVNSFVKRPDNTLPVALDLTGTPLFVWKVNGSDINVDWGKPIIDYILTGNTSYPVSDNIVQVDAVDQWTYWLIENDPEGPFSLPHPMHLHGHDFLVLGRSPDVPAASQQRFVFDPAVDLARLNGDNPPRRDTTMLPAGGWLLLAFRTDNPGAWLFHCHIAWHVSGGLSVDFLERPADLRQRISQEDEDDFNRVCDEWRAYWPTNPYPKIDSGLKRRRWVEESEWLVR.

An N-terminal signal peptide occupies residues 1 to 22 (MKTFTSALALVVGMLAPGAVVA). Residues 23 to 50 (APPSTPAQRDLVELREARQEGGKDLRPR) constitute a propeptide that is removed on maturation. A disulfide bridge links Cys-54 with Cys-62. N-linked (GlcNAc...) asparagine glycans are attached at residues Asn-89 and Asn-138. His-143, His-145, His-188, and His-190 together coordinate Cu cation. Intrachain disulfides connect Cys-164–Cys-590 and Cys-348–Cys-382. Residues Asn-251, Asn-266, Asn-294, and Asn-339 are each glycosylated (N-linked (GlcNAc...) asparagine). N-linked (GlcNAc...) asparagine glycans are attached at residues Asn-426 and Asn-446. His-481, His-484, His-486, His-552, Cys-553, His-554, and His-558 together coordinate Cu cation. A propeptide spanning residues 610–623 (KRRRWVEESEWLVR) is cleaved from the precursor.

Belongs to the multicopper oxidase family. As to quaternary structure, monomer. Requires Cu cation as cofactor. In terms of tissue distribution, secreted protein; extracellular space.

The catalysed reaction is 4 hydroquinone + O2 = 4 benzosemiquinone + 2 H2O. Functionally, lignin degradation and detoxification of lignin-derived products. This Melanocarpus albomyces protein is Laccase-1 (LAC1).